Consider the following 274-residue polypeptide: Shikimate dehydrogenase (NADP(+)) (274 aa).

Shikimate contacts are provided by residues 14–16 and T61; that span reads SLS. K65 functions as the Proton acceptor in the catalytic mechanism. Shikimate is bound by residues N85 and D106. Residues 130–134, 153–158, and A217 contribute to the NADP(+) site; these read GAGGA and NRTAER. Y219 is a binding site for shikimate. G240 is a binding site for NADP(+).

It belongs to the shikimate dehydrogenase family. In terms of assembly, homodimer.

It catalyses the reaction shikimate + NADP(+) = 3-dehydroshikimate + NADPH + H(+). Its pathway is metabolic intermediate biosynthesis; chorismate biosynthesis; chorismate from D-erythrose 4-phosphate and phosphoenolpyruvate: step 4/7. Its function is as follows. Involved in the biosynthesis of the chorismate, which leads to the biosynthesis of aromatic amino acids. Catalyzes the reversible NADPH linked reduction of 3-dehydroshikimate (DHSA) to yield shikimate (SA). In Halorubrum lacusprofundi (strain ATCC 49239 / DSM 5036 / JCM 8891 / ACAM 34), this protein is Shikimate dehydrogenase (NADP(+)).